The sequence spans 316 residues: Transmembrane protein 231 (316 aa).

Residues 23-43 (AALFLLLAAALTYIPPLLVAF) traverse the membrane as a helical segment. 3 N-linked (GlcNAc...) asparagine glycosylation sites follow: Asn194, Asn199, and Asn221. A helical membrane pass occupies residues 262-282 (FWEMVKFAWVQYVSILLIFLW).

Belongs to the TMEM231 family. Part of the tectonic-like complex (also named B9 complex). Interacts with TMEM107.

The protein resides in the cell projection. It is found in the cilium membrane. Transmembrane component of the tectonic-like complex, a complex localized at the transition zone of primary cilia and acting as a barrier that prevents diffusion of transmembrane proteins between the cilia and plasma membranes. Required for ciliogenesis and sonic hedgehog/SHH signaling. The polypeptide is Transmembrane protein 231 (TMEM231) (Homo sapiens (Human)).